Consider the following 128-residue polypeptide: Cholecystokinin B (128 aa).

An N-terminal signal peptide occupies residues methionine 1 to alanine 20. Residues histidine 21 to arginine 108 constitute a propeptide that is removed on maturation. Residues tyrosine 47–arginine 67 form a disordered region. Sulfotyrosine is present on tyrosine 110. Phenylalanine 116 carries the phenylalanine amide modification. Positions serine 120–serine 128 are excised as a propeptide.

The protein belongs to the gastrin/cholecystokinin family. Post-translationally, the precursor is cleaved by proteases to produce a number of active cholecystokinins. In terms of tissue distribution, brain and gastrointestinal tract.

The protein localises to the secreted. This Xenopus laevis (African clawed frog) protein is Cholecystokinin B (cck-b).